The primary structure comprises 615 residues: Filament-like plant protein 3 (615 aa).

Basic and acidic residues predominate over residues 1-18 (MDRRSWLWRRKSSEKSPG). The segment at 1–55 (MDRRSWLWRRKSSEKSPGETESTGSVSSHSERFSDDQRSQSPELNSKPVTREEEA) is disordered. Over residues 19–28 (ETESTGSVSS) the composition is skewed to polar residues. Residues 29-38 (HSERFSDDQR) show a composition bias toward basic and acidic residues. Over residues 39-48 (SQSPELNSKP) the composition is skewed to polar residues. Coiled-coil stretches lie at residues 87–121 (AEEA…LEDR) and 148–211 (EEAI…KSEE). Disordered stretches follow at residues 258–289 (DNSS…SPSE) and 319–343 (PHSE…HVNQ). Over residues 262 to 288 (DLKSSIDNQSDYSGRVSFSDNEMQSPS) the composition is skewed to polar residues. Over residues 322–343 (EPGRKHSESNKELEKSNAHVNQ) the composition is skewed to basic and acidic residues. Residues 327-563 (HSESNKELEK…KQELEHHQET (237 aa)) are a coiled coil.

Belongs to the FPP family. In terms of assembly, interacts with WPP/MAF proteins. Binds to COG2; this interaction promotes the association between cortical microtubules and EXO70A1. As to expression, accumulates in preferentially xylem cells.

The protein resides in the vesicle. In terms of biological role, ensures, when in complex with COG2 and FPP2/VETH2, the correct secondary cell wall (SCW) deposition pattern by recruiting exocyst components to cortical microtubules in xylem cells during secondary cell wall deposition by recruiting EXO70A1. The sequence is that of Filament-like plant protein 3 from Arabidopsis thaliana (Mouse-ear cress).